Here is a 505-residue protein sequence, read N- to C-terminus: MAQVINTNSLSLLTQNNLNKSQSSLSSAIERLSSGLRINSAKDDAAGQAIANRFTSNIKGLTQASRNANDGISIAQTTEGALNEINNNLQRVRELSVQATNGTNSDSDLKSIQDEIQQRLEEIDRVSNQTQFNGVKVLSQDNQMKIQVGANDGETITIDLQKIDVKSLGLDGFNVNGPKEATVGDLKSSFKNVTGYDTYAAGADKYRVDINSGAVVTDAVAPDKVYVNAANGQLTTDDAENNTAVDLFKTTKSTAGTAEAKAIAGAIKGGKEGDTFDYKGVTFTIDTKTGDDGNGKVSTTINGEKVTLTVADIGIGAADVNAATLQSSKNVYTSVVNGQFTFDDKTKNESAKLSDLEANNAVKGESKITVNGAEYTANATGDKITLAGKTMFIDKTASGVSTLINEDAAAAKKSTANPLASIDSALSKVDAVRSSLGAIQNRFDSAITNLGNTVTNLNSARSRIEDADYATEVSNMSKAQILQQAGTSVLAQANQVPQNVLSLLR.

The protein belongs to the bacterial flagellin family.

It is found in the secreted. Its subcellular location is the bacterial flagellum. Its function is as follows. Flagellin is the subunit protein which polymerizes to form the filaments of bacterial flagella. This chain is Flagellin (fliC), found in Salmonella rostock.